The following is a 787-amino-acid chain: ISWI one complex protein 3 (787 aa).

Residues 1 to 22 (MDSPSNSIQNLQQEAQGSSSAQ) show a composition bias toward polar residues. Disordered stretches follow at residues 1–137 (MDSP…AHEQ), 672–693 (ILEQKSTTDNNPSINTNPLPKD), and 749–787 (TEYDSEEYVDDEEDDEADIYDDNDNDSSFDDGRVKRQRT). The span at 40 to 50 (DQSVSVSQSSD) shows a compositional bias: low complexity. Over residues 79–92 (KPKRKRPAPPKKKA) the composition is skewed to basic residues. The segment covering 100 to 137 (SNDKVEKKKTTSIAKDGKPTLKTNDKKVAPKPKPAHEQ) has biased composition (basic and acidic residues). Residues 675–689 (QKSTTDNNPSINTNP) are compositionally biased toward polar residues. Residues 751–777 (YDSEEYVDDEEDDEADIYDDNDNDSSF) show a composition bias toward acidic residues. Residues 778 to 787 (DDGRVKRQRT) show a composition bias toward basic and acidic residues.

Component of the ISW1A complex, which at least consists of ISW1 and IOC3.

It is found in the nucleus. Its function is as follows. Functions as a component of the ISW1A complex, which acts in remodeling the chromatin by catalyzing an ATP-dependent alteration in the structure of nucleosomal DNA. The ISW1A complex represses gene expression at initiation through specific positioning of a promoter proximal dinucleosome. In Saccharomyces cerevisiae (strain ATCC 204508 / S288c) (Baker's yeast), this protein is ISWI one complex protein 3 (IOC3).